We begin with the raw amino-acid sequence, 581 residues long: Transcription factor GTE2 (581 aa).

The interval 130-153 (VKKTKTKKKKIGHGQKRSNPFATD) is disordered. A compositionally biased stretch (basic residues) spans 131–145 (KKTKTKKKKIGHGQK). In terms of domain architecture, Bromo spans 169–275 (KVLKSMMTTC…SQFDVWFNPT (107 aa)). Disordered stretches follow at residues 329–399 (PLLP…KREM) and 470–581 (KRQG…KEAP). The segment covering 346–365 (PSPPPSPVQPPPPPSPPPQP) has biased composition (pro residues). The NET domain occupies 389 to 470 (PKAKDPNKRE…NYRKMASKIK (82 aa)). Basic and acidic residues-rich tracts occupy residues 390–399 (KAKDPNKREM) and 493–503 (SAEKRGRKGGE). A compositionally biased stretch (acidic residues) spans 504-517 (AGEEDVDIGEDIPV). Positions 530 to 564 (TAAAASGGSSSSGSFSSSGSSSSSDSESGSSSGSD) are enriched in low complexity.

Its subcellular location is the nucleus. In Arabidopsis thaliana (Mouse-ear cress), this protein is Transcription factor GTE2 (GTE2).